The primary structure comprises 363 residues: Histone-lysine N-methyltransferase ASHH3 (363 aa).

One can recognise an AWS domain in the interval 63–114; sequence DDGIFCSCSSSSPGSSSTVCGSNCHCGMLFSSCSSSCKCGSECNNKPFQQRH. The 118-residue stretch at 116-233 folds into the SET domain; the sequence is KKMKLIQTEK…KGEHLTYDYQ (118 aa). The region spanning 239-255 is the Post-SET domain; the sequence is ADQDCHCGAVGCRRKLG.

This sequence belongs to the class V-like SAM-binding methyltransferase superfamily. Histone-lysine methyltransferase family. SET2 subfamily.

Its subcellular location is the nucleus. The protein localises to the chromosome. It is found in the centromere. It catalyses the reaction L-lysyl-[histone] + S-adenosyl-L-methionine = N(6)-methyl-L-lysyl-[histone] + S-adenosyl-L-homocysteine + H(+). Histone methyltransferase. The polypeptide is Histone-lysine N-methyltransferase ASHH3 (ASHH3) (Arabidopsis thaliana (Mouse-ear cress)).